The chain runs to 307 residues: Alpha/beta-gliadin MM1 (307 aa).

The signal sequence occupies residues 1 to 20 (MKTFLILALLAIVATTARIA). Over residues 29–55 (QPQNPSQQQPQEQVPLVQQQQFPGQQQ) the composition is skewed to low complexity. Disordered stretches follow at residues 29-134 (QPQN…QQQQ) and 242-267 (QQQYPSGQGSFQPSQQNPQAQGSVQP). 2 stretches are compositionally biased toward pro residues: residues 56-71 (PFPPQQPYPQPQPFPS) and 81-113 (FPQPQLPYPQPQLPYPQPQLPYPQPQPFRPQQP). Residues 76–108 (LQLQPFPQPQLPYPQPQLPYPQPQLPYPQPQPF) are sufficient to initiate the primary inflammatory response to gluten in Celiac Sprue patients. Low complexity-rich tracts occupy residues 114–134 (YPQSQPQYSQPQQPISQQQQQ) and 242–260 (QQQYPSGQGSFQPSQQNPQ).

Belongs to the gliadin/glutenin family. In terms of processing, substrate of transglutaminase. Expressed in endosperm.

Gliadin is the major seed storage protein in wheat. The chain is Alpha/beta-gliadin MM1 from Triticum aestivum (Wheat).